Consider the following 184-residue polypeptide: MIVAVEGIITKKEPTFCVLKTVTGVSYGISISLGCSARINKGEKIELLTAQILREDADLLYGFLDEKEKRMFEMLIKLNGIGANTAMAVCSSLSSDNFLRAIINGDTATLTTVPGIGPKTARRIIAELSDAKIELANDGEQYKIETISALENLGFKRDKINKILLNCKSTNTADLIKEALKKLA.

The interval 1–64 is domain I; sequence MIVAVEGIIT…EDADLLYGFL (64 aa). Residues 65-145 form a domain II region; the sequence is DEKEKRMFEM…ANDGEQYKIE (81 aa). A region of interest (flexible linker) is located at residue E145. The domain III stretch occupies residues 145-184; it reads ETISALENLGFKRDKINKILLNCKSTNTADLIKEALKKLA.

This sequence belongs to the RuvA family. In terms of assembly, homotetramer. Forms an RuvA(8)-RuvB(12)-Holliday junction (HJ) complex. HJ DNA is sandwiched between 2 RuvA tetramers; dsDNA enters through RuvA and exits via RuvB. An RuvB hexamer assembles on each DNA strand where it exits the tetramer. Each RuvB hexamer is contacted by two RuvA subunits (via domain III) on 2 adjacent RuvB subunits; this complex drives branch migration. In the full resolvosome a probable DNA-RuvA(4)-RuvB(12)-RuvC(2) complex forms which resolves the HJ.

Its subcellular location is the cytoplasm. Functionally, the RuvA-RuvB-RuvC complex processes Holliday junction (HJ) DNA during genetic recombination and DNA repair, while the RuvA-RuvB complex plays an important role in the rescue of blocked DNA replication forks via replication fork reversal (RFR). RuvA specifically binds to HJ cruciform DNA, conferring on it an open structure. The RuvB hexamer acts as an ATP-dependent pump, pulling dsDNA into and through the RuvAB complex. HJ branch migration allows RuvC to scan DNA until it finds its consensus sequence, where it cleaves and resolves the cruciform DNA. This Campylobacter hominis (strain ATCC BAA-381 / DSM 21671 / CCUG 45161 / LMG 19568 / NCTC 13146 / CH001A) protein is Holliday junction branch migration complex subunit RuvA.